A 179-amino-acid polypeptide reads, in one-letter code: Dual-action ribosomal maturation protein DarP (179 aa).

The protein belongs to the DarP family.

It localises to the cytoplasm. In terms of biological role, member of a network of 50S ribosomal subunit biogenesis factors which assembles along the 30S-50S interface, preventing incorrect 23S rRNA structures from forming. Promotes peptidyl transferase center (PTC) maturation. The protein is Dual-action ribosomal maturation protein DarP of Photorhabdus laumondii subsp. laumondii (strain DSM 15139 / CIP 105565 / TT01) (Photorhabdus luminescens subsp. laumondii).